The sequence spans 421 residues: MSNQLYLECYSGISGDMAVSALLDLGADVDVLKKSLHSLNLEGYEINIGRRQKCGIDACYFDVVLEGEANHHHDHQEKHDHHHGGHPVHRNIKDIYEIIDNSQISDRSKILSKKIFHVVAKAEAKAHGIAIDEVHFHEVGAVDSIVDIVAAAVCLDNLEINEVMISDLYEGSGHVKCQHGVLPVPVPAVANIVMDNGLNLRITDTRGELVTPTGAAIAAAIKTKDTLPASYGIKKIGIGSGTKDLPKANILRAYIIEDNRNYPKKTVAVEDHIDSLDDGEAWVLETNIDDATGESLGFTMERLLENGANDVFFSPIYMKKNRPAYKLSVICTKENVKIMESIIFKNTTTIGIRKHKIRRTVLKREVTTIDTKYGQVRVKVCEFENETYYYPEYEDIKRICNETGLGFQRVYDEVEKTKTVG.

This sequence belongs to the LarC family.

It catalyses the reaction Ni(II)-pyridinium-3,5-bisthiocarboxylate mononucleotide = pyridinium-3,5-bisthiocarboxylate mononucleotide + Ni(2+). Involved in the biosynthesis of a nickel-pincer cofactor ((SCS)Ni(II) pincer complex). Binds Ni(2+), and functions in nickel delivery to pyridinium-3,5-bisthiocarboxylic acid mononucleotide (P2TMN), to form the mature cofactor. Is thus probably required for the activation of nickel-pincer cofactor-dependent enzymes. The protein is Pyridinium-3,5-bisthiocarboxylic acid mononucleotide nickel insertion protein of Alkaliphilus metalliredigens (strain QYMF).